The primary structure comprises 367 residues: MPRPIEALIHAEALTHNLARARAAVPDARVWAVVKAHAYGHGIARVFEALRAADGFALLDLAEAQQLRDLGWRGPILLLEGVFEPRDLELCSRLNLWHTVHCEAQIDWLAMHKTHQPHRVFLKMNSGMNRLGFRPAAFRAAWTRLHALPQVDEISLMSHFSDADGGRGIAAAMQVFDDATRDLPGERSLCNSAATLRHGADAAVRADWVRAGIMLYGSAPDFPSHDIAHWDLQPTMTLRARLIGTQDLQAGDTVGYGSRFTAEAPMRIGVVACGYADGYPRHAPSGTPVLVDGVRTRLVGRVSMDMVTVDLGGLPQAARGSEVTLWGRASSGAVLPIDEVAHAAGTVGYEPMCALAARVPVRLDAAG.

The Proton acceptor; specific for D-alanine role is filled by Lys-35. The residue at position 35 (Lys-35) is an N6-(pyridoxal phosphate)lysine. Arg-130 is a binding site for substrate. Tyr-256 (proton acceptor; specific for L-alanine) is an active-site residue. A substrate-binding site is contributed by Met-304.

This sequence belongs to the alanine racemase family. The cofactor is pyridoxal 5'-phosphate.

It catalyses the reaction L-alanine = D-alanine. Its pathway is amino-acid biosynthesis; D-alanine biosynthesis; D-alanine from L-alanine: step 1/1. Catalyzes the interconversion of L-alanine and D-alanine. May also act on other amino acids. The protein is Alanine racemase (alr) of Methylibium petroleiphilum (strain ATCC BAA-1232 / LMG 22953 / PM1).